Consider the following 321-residue polypeptide: S-methyl-5'-thioadenosine phosphorylase (321 aa).

Residues Thr-30, 73–74 (RH), and 106–107 (SA) contribute to the phosphate site. Met-215 serves as a coordination point for substrate. A phosphate-binding site is contributed by Ser-216. 239-241 (DYD) serves as a coordination point for substrate.

Belongs to the PNP/MTAP phosphorylase family. MTAP subfamily. As to quaternary structure, homotrimer.

The protein resides in the cytoplasm. The protein localises to the nucleus. It catalyses the reaction S-methyl-5'-thioadenosine + phosphate = 5-(methylsulfanyl)-alpha-D-ribose 1-phosphate + adenine. Its pathway is amino-acid biosynthesis; L-methionine biosynthesis via salvage pathway; S-methyl-5-thio-alpha-D-ribose 1-phosphate from S-methyl-5'-thioadenosine (phosphorylase route): step 1/1. Its function is as follows. Catalyzes the reversible phosphorylation of S-methyl-5'-thioadenosine (MTA) to adenine and 5-methylthioribose-1-phosphate. Involved in the breakdown of MTA, a major by-product of polyamine biosynthesis. Responsible for the first step in the methionine salvage pathway after MTA has been generated from S-adenosylmethionine. Has broad substrate specificity with 6-aminopurine nucleosides as preferred substrates. The chain is S-methyl-5'-thioadenosine phosphorylase from Yarrowia lipolytica (strain CLIB 122 / E 150) (Yeast).